The chain runs to 187 residues: Threonylcarbamoyl-AMP synthase (187 aa).

Residues 3–187 (NSELLKIIWA…LLNGYLYRKR (185 aa)) enclose the YrdC-like domain.

The protein belongs to the SUA5 family. TsaC subfamily.

The protein resides in the cytoplasm. The catalysed reaction is L-threonine + hydrogencarbonate + ATP = L-threonylcarbamoyladenylate + diphosphate + H2O. Functionally, required for the formation of a threonylcarbamoyl group on adenosine at position 37 (t(6)A37) in tRNAs that read codons beginning with adenine. Catalyzes the conversion of L-threonine, HCO(3)(-)/CO(2) and ATP to give threonylcarbamoyl-AMP (TC-AMP) as the acyladenylate intermediate, with the release of diphosphate. The polypeptide is Threonylcarbamoyl-AMP synthase (Riesia pediculicola (strain USDA)).